A 362-amino-acid polypeptide reads, in one-letter code: Thiol protease aleurain (362 aa).

The first 22 residues, 1 to 22, serve as a signal peptide directing secretion; sequence MAHARVLLLALAVLATAAVAVA. The propeptide at 23 to 143 is activation peptide; that stretch reads SSSSFADSNP…GNHLMRDAAA (121 aa). 2 cysteine pairs are disulfide-bonded: cysteine 165/cysteine 208 and cysteine 199/cysteine 241. Cysteine 168 is an active-site residue. An N-linked (GlcNAc...) asparagine glycan is attached at asparagine 188. N-linked (GlcNAc...) asparagine glycosylation occurs at asparagine 257. Cysteine 299 and cysteine 349 are disulfide-bonded. Residues histidine 308 and asparagine 328 contribute to the active site.

Belongs to the peptidase C1 family.

It is found in the vacuole. It catalyses the reaction Hydrolysis of proteins, acting as an aminopeptidase (notably, cleaving Arg-|-Xaa bonds) as well as an endopeptidase.. In terms of biological role, may play a role in proteolysis leading to mobilization of nitrogen during senescence and starvation. In Hordeum vulgare (Barley), this protein is Thiol protease aleurain.